We begin with the raw amino-acid sequence, 401 residues long: Imidazolonepropionase (401 aa).

His-70 and His-72 together coordinate Fe(3+). The Zn(2+) site is built by His-70 and His-72. 4-imidazolone-5-propanoate-binding residues include Arg-79, Tyr-142, and His-175. Residue Tyr-142 participates in N-formimidoyl-L-glutamate binding. His-240 is a Fe(3+) binding site. His-240 serves as a coordination point for Zn(2+). Gln-243 is a binding site for 4-imidazolone-5-propanoate. A Fe(3+)-binding site is contributed by Asp-315. Residue Asp-315 participates in Zn(2+) binding. N-formimidoyl-L-glutamate-binding residues include Asn-317 and Gly-319. Ser-320 provides a ligand contact to 4-imidazolone-5-propanoate.

This sequence belongs to the metallo-dependent hydrolases superfamily. HutI family. It depends on Zn(2+) as a cofactor. Requires Fe(3+) as cofactor.

It localises to the cytoplasm. It carries out the reaction 4-imidazolone-5-propanoate + H2O = N-formimidoyl-L-glutamate. It participates in amino-acid degradation; L-histidine degradation into L-glutamate; N-formimidoyl-L-glutamate from L-histidine: step 3/3. Catalyzes the hydrolytic cleavage of the carbon-nitrogen bond in imidazolone-5-propanoate to yield N-formimidoyl-L-glutamate. It is the third step in the universal histidine degradation pathway. The polypeptide is Imidazolonepropionase (Ruegeria pomeroyi (strain ATCC 700808 / DSM 15171 / DSS-3) (Silicibacter pomeroyi)).